The primary structure comprises 467 residues: ATP synthase subunit beta (467 aa).

150 to 157 lines the ATP pocket; sequence GGAGVGKT.

Belongs to the ATPase alpha/beta chains family. As to quaternary structure, F-type ATPases have 2 components, CF(1) - the catalytic core - and CF(0) - the membrane proton channel. CF(1) has five subunits: alpha(3), beta(3), gamma(1), delta(1), epsilon(1). CF(0) has three main subunits: a(1), b(2) and c(9-12). The alpha and beta chains form an alternating ring which encloses part of the gamma chain. CF(1) is attached to CF(0) by a central stalk formed by the gamma and epsilon chains, while a peripheral stalk is formed by the delta and b chains.

Its subcellular location is the cell inner membrane. It catalyses the reaction ATP + H2O + 4 H(+)(in) = ADP + phosphate + 5 H(+)(out). Produces ATP from ADP in the presence of a proton gradient across the membrane. The catalytic sites are hosted primarily by the beta subunits. This Aliivibrio fischeri (strain ATCC 700601 / ES114) (Vibrio fischeri) protein is ATP synthase subunit beta.